A 331-amino-acid polypeptide reads, in one-letter code: 2-oxoglutarate-dependent dioxygenase (331 aa).

Residues 186-292 (PACPLRLLHY…RYSVVFFMDG (107 aa)) enclose the Fe2OG dioxygenase domain. Fe cation contacts are provided by His214, Asp216, and His272. Position 283 (Arg283) interacts with 2-oxoglutarate.

It belongs to the iron/ascorbate-dependent oxidoreductase family. Fe(2+) serves as cofactor.

The protein operates within mycotoxin biosynthesis. 2-oxoglutarate-dependent dioxygenase; part of the gene cluster that mediates the biosynthesis of the selective antifungal agent ascochitine, an o-quinone methide that plays a possible protective role against other microbial competitors in nature and is considered to be important for pathogenicity of legume-associated Didymella species. The pathway probably begins with the synthesis of a keto-aldehyde intermediate by the ascochitine non-reducing polyketide synthase pksAC from successive condensations of 4 malonyl-CoA units, presumably with a simple acetyl-CoA starter unit. Release of the keto-aldehyde intermediate is consistent with the presence of the C-terminal reductive release domain. The HR-PKS (orf7) probably makes a diketide starter unit which is passed to the non-reducing polyketide synthase pksAC for further extension, producing ascochital and ascochitine. The aldehyde dehydrogenase (orf1), the 2-oxoglutarate-dependent dioxygenase (orf3) and the dehydrogenase (orf9) are probably involved in subsequent oxidations of methyl groups to the carboxylic acid of the heterocyclic ring. The ascochitine gene cluster also includes a gene encoding a short peptide with a cupin domain (orf2) that is often found in secondary metabolite gene clusters and which function has still to be determined. This Didymella fabae (Leaf and pod spot disease fungus) protein is 2-oxoglutarate-dependent dioxygenase.